The following is an 88-amino-acid chain: FXYD domain-containing ion transport regulator 3 (88 aa).

The N-terminal stretch at 1 to 17 (MHEVALSVLILLAGLSA) is a signal peptide. The Extracellular portion of the chain corresponds to 18-38 (LDANDPEDKNSPFYYDWHSLR). The chain crosses the membrane as a helical span at residues 39-59 (VGGLICAGTPCALGIIILLSG). Residues 60-88 (KCKCKFSQKPSHRPGDAPPLITPGSAHDC) lie on the Cytoplasmic side of the membrane. The tract at residues 66–88 (SQKPSHRPGDAPPLITPGSAHDC) is disordered.

The protein belongs to the FXYD family. Regulatory subunit of the sodium/potassium-transporting ATPase which is composed of a catalytic alpha subunit, a non-catalytic beta subunit and an additional regulatory subunit. Interacts with catalytic alpha subunit ATP1A1. Also interacts with non-catalytic beta subunit ATP1B1. Interacts with the alpha1-beta1, alpha2-beta1 and alpha3-beta1 NKA isozymes. Glutathionylated.

The protein resides in the cell membrane. Its function is as follows. Associates with and regulates the activity of the sodium/potassium-transporting ATPase (NKA) which transports Na(+) out of the cell and K(+) into the cell. Reduces glutathionylation of the NKA beta-1 subunit ATP1B1, thus reversing glutathionylation-mediated inhibition of ATP1B1. Induces a hyperpolarization-activated chloride current when expressed in Xenopus oocytes. The sequence is that of FXYD domain-containing ion transport regulator 3 (FXYD3) from Sus scrofa (Pig).